The chain runs to 145 residues: SsrA-binding protein (145 aa).

This sequence belongs to the SmpB family.

The protein resides in the cytoplasm. In terms of biological role, required for rescue of stalled ribosomes mediated by trans-translation. Binds to transfer-messenger RNA (tmRNA), required for stable association of tmRNA with ribosomes. tmRNA and SmpB together mimic tRNA shape, replacing the anticodon stem-loop with SmpB. tmRNA is encoded by the ssrA gene; the 2 termini fold to resemble tRNA(Ala) and it encodes a 'tag peptide', a short internal open reading frame. During trans-translation Ala-aminoacylated tmRNA acts like a tRNA, entering the A-site of stalled ribosomes, displacing the stalled mRNA. The ribosome then switches to translate the ORF on the tmRNA; the nascent peptide is terminated with the 'tag peptide' encoded by the tmRNA and targeted for degradation. The ribosome is freed to recommence translation, which seems to be the essential function of trans-translation. In Mycoplasma genitalium (strain ATCC 33530 / DSM 19775 / NCTC 10195 / G37) (Mycoplasmoides genitalium), this protein is SsrA-binding protein.